Here is a 557-residue protein sequence, read N- to C-terminus: MAPRRRRHTRIAGLRVVGTATLVAATTLTACSGSAAAQIDYVVDGALVTYNTNTVIGAASAGAQAFARTLTGFGYHGPDGQVVADRDFGTVSVVEGSPLILDYQISDDAVYSDGRPVTCDDLVLAWAAQSGRFPGFDAATQAGYVDIANIECTAGQKKARVSFIPDRSVVDHSQLFTATSLMPSHVIADQLHIDVTAALLSNNVSAVEQIARLWNSTWDLKPGRSHDEVRSRFPSSGPYKIESVLDDGAVVLVANDRWWGTKAITKRITVWPQGADIQDRVNNRSVDVVDVAAGSSGSLVTPDSYQRTDYPSAGIEQLIFAPQGSLAQSRTRRALALCVPRDAIARDAGVPIANSRLSPATDDALTDADGAAEARQFGRVDPAAARDALGGTPLTVRIGYGRPNARLAATIGTIADACAPAGITVSDVTVDTPGPQALRDGKIDVLLASTGGATGSGSSGSSAMDAYDLHSGNGNNLSGYANAQIDGIISALAVSADPAERARLLAEAAPVLWDEMPTLPLYRQQRTLLMSTKMYAVSRNPTRWGAGWNMDRWALAR.

The signal sequence occupies residues 1-30 (MAPRRRRHTRIAGLRVVGTATLVAATTLTA). A lipid anchor (N-palmitoyl cysteine) is attached at cysteine 31. Cysteine 31 carries the S-diacylglycerol cysteine lipid modification.

The protein to M.bovis Mb2616c and M.leprae ML0489.

It is found in the cell membrane. This is an uncharacterized protein from Mycobacterium tuberculosis (strain CDC 1551 / Oshkosh).